A 486-amino-acid chain; its full sequence is ATP synthase subunit beta (486 aa).

Position 171–178 (171–178 (GGAGVGKT)) interacts with ATP.

This sequence belongs to the ATPase alpha/beta chains family. In terms of assembly, F-type ATPases have 2 components, CF(1) - the catalytic core - and CF(0) - the membrane proton channel. CF(1) has five subunits: alpha(3), beta(3), gamma(1), delta(1), epsilon(1). CF(0) has three main subunits: a(1), b(2) and c(9-12). The alpha and beta chains form an alternating ring which encloses part of the gamma chain. CF(1) is attached to CF(0) by a central stalk formed by the gamma and epsilon chains, while a peripheral stalk is formed by the delta and b chains.

The protein localises to the cell membrane. The enzyme catalyses ATP + H2O + 4 H(+)(in) = ADP + phosphate + 5 H(+)(out). Its function is as follows. Produces ATP from ADP in the presence of a proton gradient across the membrane. The catalytic sites are hosted primarily by the beta subunits. The protein is ATP synthase subunit beta of Salinispora tropica (strain ATCC BAA-916 / DSM 44818 / JCM 13857 / NBRC 105044 / CNB-440).